We begin with the raw amino-acid sequence, 200 residues long: GTP cyclohydrolase-2 (200 aa).

Arg-50–Glu-54 contributes to the GTP binding site. Zn(2+)-binding residues include Cys-55, Cys-66, and Cys-68. Residues Gln-71, Glu-93 to Arg-95, and Thr-115 contribute to the GTP site. Asp-127 serves as the catalytic Proton acceptor. The active-site Nucleophile is the Arg-129. Residues Thr-150 and Lys-155 each contribute to the GTP site.

This sequence belongs to the GTP cyclohydrolase II family. Zn(2+) serves as cofactor.

It carries out the reaction GTP + 4 H2O = 2,5-diamino-6-hydroxy-4-(5-phosphoribosylamino)-pyrimidine + formate + 2 phosphate + 3 H(+). The protein operates within cofactor biosynthesis; riboflavin biosynthesis; 5-amino-6-(D-ribitylamino)uracil from GTP: step 1/4. Catalyzes the conversion of GTP to 2,5-diamino-6-ribosylamino-4(3H)-pyrimidinone 5'-phosphate (DARP), formate and pyrophosphate. The protein is GTP cyclohydrolase-2 of Acinetobacter baumannii (strain AB0057).